The chain runs to 179 residues: Large ribosomal subunit protein uL5 (179 aa).

It belongs to the universal ribosomal protein uL5 family. As to quaternary structure, part of the 50S ribosomal subunit; part of the 5S rRNA/L5/L18/L25 subcomplex. Contacts the 5S rRNA and the P site tRNA. Forms a bridge to the 30S subunit in the 70S ribosome.

Functionally, this is one of the proteins that bind and probably mediate the attachment of the 5S RNA into the large ribosomal subunit, where it forms part of the central protuberance. In the 70S ribosome it contacts protein S13 of the 30S subunit (bridge B1b), connecting the 2 subunits; this bridge is implicated in subunit movement. Contacts the P site tRNA; the 5S rRNA and some of its associated proteins might help stabilize positioning of ribosome-bound tRNAs. The polypeptide is Large ribosomal subunit protein uL5 (Salmonella agona (strain SL483)).